Reading from the N-terminus, the 129-residue chain is Lysozyme C (129 aa).

The C-type lysozyme domain occupies 1–129 (KVFGRCELAA…VHAWIRGCRL (129 aa)). 4 cysteine pairs are disulfide-bonded: cysteine 6–cysteine 127, cysteine 30–cysteine 115, cysteine 64–cysteine 80, and cysteine 76–cysteine 94. Active-site residues include glutamate 35 and aspartate 52.

This sequence belongs to the glycosyl hydrolase 22 family. In terms of assembly, monomer.

Its subcellular location is the secreted. The catalysed reaction is Hydrolysis of (1-&gt;4)-beta-linkages between N-acetylmuramic acid and N-acetyl-D-glucosamine residues in a peptidoglycan and between N-acetyl-D-glucosamine residues in chitodextrins.. In terms of biological role, lysozymes have primarily a bacteriolytic function; those in tissues and body fluids are associated with the monocyte-macrophage system and enhance the activity of immunoagents. This is Lysozyme C (LYZ) from Callipepla californica (California quail).